The chain runs to 202 residues: MFITFEGIDGSGKTTQSHLLTEYLSKIYGVNNVVLTREPGGTLLNEAVRDLLFQAKGLDSLSELLFFIAMRREHFMKVIKPSLMQKKIVVCDRFIDSTIAYQGYGQGIDCNLICQLNDLVVDMYPDITFVIDVDVHESLSRSCKNGYEFAELEFYYRVRNGFYSIVEKNPHRCHIITDNNEICDIDGINLIHLKIVKVLQMV.

7–14 (GIDGSGKT) contacts ATP.

Belongs to the thymidylate kinase family.

It catalyses the reaction dTMP + ATP = dTDP + ADP. In terms of biological role, phosphorylation of dTMP to form dTDP in both de novo and salvage pathways of dTTP synthesis. The sequence is that of Thymidylate kinase from Ehrlichia canis (strain Jake).